Here is a 575-residue protein sequence, read N- to C-terminus: MDIIAKLRDVSFDELHPNERLKVDSHYLYGTLEESLADRATGAVSDADTQLTKFHGFYQQDDRDLRDDRRHRKLEPLYSFMVRLRLPGGRVSPEQWLTLDDNARRYANGTLRITTRQTFQYHGVFKENLRGHLQALDKAMMDTIAACGDVNRNVICTANPHRSPIHRQVHDLAHEISAHLLPRTRAYHEIFLGEERVAGGPREAEDEVEPLYTRHYLPRKFKVALAIPPENDVDVFAHDVGFIADVQAGELKGFNVCIGGGMGMTHGEPATFPRLSDIVGYCTPDRVVAVAEAIMLVQRDNGNRHDRKQARLKYTVEALGVDGFRQEVEARLGEALSPARELTLTHNGDRLGWYQGEDGLWHYGLFVQNGRLADSDGGPQLMTGMREIAQAHDGDIVLTTNQNLIITQVPEARREVIDDLLDRYRMTVEATPLRRHAMACVAFPTCGLAMAESERYLPSLIDRLDAIMREAGLADDAIIVRMTGCPNGCARPYLAEIGFVGKTIGRYNLYLGGGFAGERLNKLYRENIDEATILEELTPLIRRYAVEREPGEAFGDFVVRTGIIAPTLAGREFHA.

Residues C440, C446, C485, and C489 each contribute to the [4Fe-4S] cluster site. C489 is a binding site for siroheme.

Belongs to the nitrite and sulfite reductase 4Fe-4S domain family. In terms of assembly, alpha(8)-beta(8). The alpha component is a flavoprotein, the beta component is a hemoprotein. Siroheme serves as cofactor. Requires [4Fe-4S] cluster as cofactor.

The enzyme catalyses hydrogen sulfide + 3 NADP(+) + 3 H2O = sulfite + 3 NADPH + 4 H(+). It functions in the pathway sulfur metabolism; hydrogen sulfide biosynthesis; hydrogen sulfide from sulfite (NADPH route): step 1/1. Component of the sulfite reductase complex that catalyzes the 6-electron reduction of sulfite to sulfide. This is one of several activities required for the biosynthesis of L-cysteine from sulfate. This is Sulfite reductase [NADPH] hemoprotein beta-component from Chromohalobacter salexigens (strain ATCC BAA-138 / DSM 3043 / CIP 106854 / NCIMB 13768 / 1H11).